Here is a 251-residue protein sequence, read N- to C-terminus: MTSLVSLENVSVSFGQRRVLSDVSLELKPGKILTLLGPNGAGKSTLVRVVLGLVTPDEGVIKRNGKLRIGYVPQKLYLDTTLPLTVNRFLRLRPGTHKEDILPALKRVQAGHLINAPMQKLSGGETQRVLLARALLNCPQLLVLDEPTQGVDVNGQVALYDLIDQLRRELDCGVLMVSHDLHLVMAKTDEVLCLNHHICCSGTPEVVSLHPEFISMFGPRGAEQLGIYRHHHNHRHDLQGRIVLRRGNDRS.

The 216-residue stretch at 5–220 (VSLENVSVSF…PEFISMFGPR (216 aa)) folds into the ABC transporter domain. ATP is bound at residue 37–44 (GPNGAGKS).

The protein belongs to the ABC transporter superfamily. Zinc importer (TC 3.A.1.15.5) family. As to quaternary structure, the complex is composed of two ATP-binding proteins (ZnuC), two transmembrane proteins (ZnuB) and a solute-binding protein (ZnuA).

The protein localises to the cell inner membrane. The catalysed reaction is Zn(2+)(out) + ATP(in) + H2O(in) = Zn(2+)(in) + ADP(in) + phosphate(in) + H(+)(in). In terms of biological role, part of the ABC transporter complex ZnuABC involved in zinc import. Responsible for energy coupling to the transport system. The sequence is that of Zinc import ATP-binding protein ZnuC from Shigella flexneri serotype 5b (strain 8401).